A 557-amino-acid polypeptide reads, in one-letter code: Urocanate hydratase (557 aa).

Residues 53 to 54 (GG), glutamine 131, 177 to 179 (GMG), glutamate 197, 243 to 244 (NA), 264 to 268 (QTSAH), 274 to 275 (YL), and tyrosine 323 each bind NAD(+). Residue cysteine 411 is part of the active site. Glycine 493 contributes to the NAD(+) binding site.

This sequence belongs to the urocanase family. NAD(+) is required as a cofactor.

Its subcellular location is the cytoplasm. The catalysed reaction is 4-imidazolone-5-propanoate = trans-urocanate + H2O. It functions in the pathway amino-acid degradation; L-histidine degradation into L-glutamate; N-formimidoyl-L-glutamate from L-histidine: step 2/3. Its function is as follows. Catalyzes the conversion of urocanate to 4-imidazolone-5-propionate. In Mesorhizobium japonicum (strain LMG 29417 / CECT 9101 / MAFF 303099) (Mesorhizobium loti (strain MAFF 303099)), this protein is Urocanate hydratase.